The following is a 312-amino-acid chain: Taste receptor type 2 member 62 (312 aa).

Over 1–4 (MPSL) the chain is Extracellular. A helical membrane pass occupies residues 5–27 (PTLIFIAIFCLESLAAMLQNGFL). At 28-39 (VTMLGREWVRCR) the chain is on the cytoplasmic side. A helical transmembrane segment spans residues 40-62 (MLSTSDMIVACLAASRFCLHGVA). At 63 to 81 (MANNLLASLDFSRAVPYMN) the chain is on the extracellular side. Residues 82 to 104 (IFWDLFNALTLWFTALLAAFYCV) form a helical membrane-spanning segment. Residues 105–127 (KISSFSHPTFAWLKWRISRLVPK) lie on the Cytoplasmic side of the membrane. The helical transmembrane segment at 128-150 (LIKGSLIICGLEVISSATGNILF) threads the bilayer. Over 151–182 (GQRKVSLSSYRNETLVYRVQASFQLYFFLYDG) the chain is Extracellular. The N-linked (GlcNAc...) asparagine glycan is linked to asparagine 162. The chain crosses the membrane as a helical span at residues 183 to 205 (FVWSIPFLLFLVSTVLLIVSLCW). Topologically, residues 206 to 231 (QLGQMRDLRPGPCDPSTQAYTMALKS) are cytoplasmic. The chain crosses the membrane as a helical span at residues 232 to 254 (LTFSLIFCTLYFLSLFASALKII). Residues 255-258 (NFQN) are Extracellular-facing. A helical transmembrane segment spans residues 259 to 281 (HWHWAWEVLIYANICLHSTVLVL). At 282 to 312 (RSPKLKKGLKTWPQLQCPCDAGSQGFGRCWP) the chain is on the cytoplasmic side.

This sequence belongs to the G-protein coupled receptor T2R family.

It localises to the membrane. Its function is as follows. Receptor that may play a role in the perception of bitterness and is gustducin-linked. May play a role in sensing the chemical composition of the gastrointestinal content. The activity of this receptor may stimulate alpha gustducin, mediate PLC-beta-2 activation and lead to the gating of TRPM5. The protein is Taste receptor type 2 member 62 (TAS2R62) of Pan paniscus (Pygmy chimpanzee).